A 116-amino-acid chain; its full sequence is Integration host factor subunit alpha (116 aa).

Disordered stretches follow at residues 58 to 80 and 94 to 116; these read FGNFQVRDKPPRPGRNPKTGETI and QKLKSTVEQSGNPAEVSDDEAAE. Polar residues predominate over residues 94-105; it reads QKLKSTVEQSGN.

It belongs to the bacterial histone-like protein family. As to quaternary structure, heterodimer of an alpha and a beta chain.

In terms of biological role, this protein is one of the two subunits of integration host factor, a specific DNA-binding protein that functions in genetic recombination as well as in transcriptional and translational control. In Bordetella avium (strain 197N), this protein is Integration host factor subunit alpha.